We begin with the raw amino-acid sequence, 405 residues long: MYMKKFNKVILAYSGGLDTSIIIPWLKENYGCEVIAVVGNVGQSDELVGLKEKAIKTGASKIYIEDLTKEFVEDYIFPTIQAGAKYEGKYLLGTSFARPIIAKRLVEIAKLEGADAICHGCTGKGNDQVRFELAIKTFNPEMQIIAPWRTWEIKSREEEIQYAIDNEVPINITYETNYSKDKNLWHLSHEGLDLEFPENEPKYDKILELCNTLEKAPNEAEYITLGFEKGIATSLNGEKLDGVTLLQELNKIGGKHGIGVIDMVENRLVGMKSRGVYETPGGSILYKAHKDLEELCLDKETSHYKEIVSLKFADLVYNGQWFTPLREALSAFISKTQETVTGEIKLKLYKGNIINAGMTSPYSLYSEEYATFGEDGIYNQKDAEGFINLFSLPSIVQAKMAQKLN.

Residue 12 to 20 (AYSGGLDTS) coordinates ATP. L-citrulline contacts are provided by Tyr90 and Ser95. ATP is bound at residue Gly120. Positions 122, 126, and 127 each coordinate L-aspartate. Residue Asn126 coordinates L-citrulline. 5 residues coordinate L-citrulline: Arg130, Ser179, Ser188, Glu265, and Tyr277.

Belongs to the argininosuccinate synthase family. Type 1 subfamily. As to quaternary structure, homotetramer.

It is found in the cytoplasm. The enzyme catalyses L-citrulline + L-aspartate + ATP = 2-(N(omega)-L-arginino)succinate + AMP + diphosphate + H(+). Its pathway is amino-acid biosynthesis; L-arginine biosynthesis; L-arginine from L-ornithine and carbamoyl phosphate: step 2/3. The protein is Argininosuccinate synthase of Clostridium perfringens (strain 13 / Type A).